Consider the following 386-residue polypeptide: Succinate--CoA ligase [ADP-forming] subunit beta (386 aa).

The ATP-grasp domain occupies 9–244; it reads KEILRKYGVP…HDEEDPLETR (236 aa). ATP is bound by residues lysine 46, 53 to 55, glutamate 99, cysteine 102, and glutamate 107; that span reads GRG. Residues asparagine 199 and aspartate 213 each coordinate Mg(2+). Substrate is bound by residues asparagine 264 and 321–323; that span reads GIM.

The protein belongs to the succinate/malate CoA ligase beta subunit family. In terms of assembly, heterotetramer of two alpha and two beta subunits. Requires Mg(2+) as cofactor.

The enzyme catalyses succinate + ATP + CoA = succinyl-CoA + ADP + phosphate. The catalysed reaction is GTP + succinate + CoA = succinyl-CoA + GDP + phosphate. It functions in the pathway carbohydrate metabolism; tricarboxylic acid cycle; succinate from succinyl-CoA (ligase route): step 1/1. Its function is as follows. Succinyl-CoA synthetase functions in the citric acid cycle (TCA), coupling the hydrolysis of succinyl-CoA to the synthesis of either ATP or GTP and thus represents the only step of substrate-level phosphorylation in the TCA. The beta subunit provides nucleotide specificity of the enzyme and binds the substrate succinate, while the binding sites for coenzyme A and phosphate are found in the alpha subunit. The chain is Succinate--CoA ligase [ADP-forming] subunit beta from Rickettsia prowazekii (strain Madrid E).